Here is a 103-residue protein sequence, read N- to C-terminus: Large ribosomal subunit protein uL23 (103 aa).

It belongs to the universal ribosomal protein uL23 family. Part of the 50S ribosomal subunit. Contacts protein L29, and trigger factor when it is bound to the ribosome.

Its function is as follows. One of the early assembly proteins it binds 23S rRNA. One of the proteins that surrounds the polypeptide exit tunnel on the outside of the ribosome. Forms the main docking site for trigger factor binding to the ribosome. The chain is Large ribosomal subunit protein uL23 from Aquifex aeolicus (strain VF5).